We begin with the raw amino-acid sequence, 511 residues long: Probable lipid II flippase MurJ (511 aa).

A run of 11 helical transmembrane segments spans residues 25-45 (DILI…FISF), 85-105 (SSIL…GGFF), 133-153 (IMFP…ILNS), 156-178 (YFSI…SVFF), 245-265 (ISLI…ISWI), 271-291 (LIEF…FTSL), 315-335 (LIVS…VIIV), 356-376 (LYSC…AFYA), 400-420 (FLIF…TSWV), 442-462 (FIFI…LFVV), and 481-501 (LFFG…ILGI).

Belongs to the MurJ/MviN family.

It is found in the cell inner membrane. Its pathway is cell wall biogenesis; peptidoglycan biosynthesis. Involved in peptidoglycan biosynthesis. Transports lipid-linked peptidoglycan precursors from the inner to the outer leaflet of the cytoplasmic membrane. The polypeptide is Probable lipid II flippase MurJ (Buchnera aphidicola subsp. Acyrthosiphon pisum (strain APS) (Acyrthosiphon pisum symbiotic bacterium)).